The following is a 663-amino-acid chain: Translation factor GUF1, mitochondrial (663 aa).

The transit peptide at 1 to 44 (MRGCLQSVRWLTTALRRPAPQLSCLPFQPFASTSRLFSSCASRA) directs the protein to the mitochondrion. In terms of domain architecture, tr-type G spans 65–245 (ERFRNFCIVA…TIVEQIPAPV (181 aa)). Residues 74-81 (AHVDHGKS), 138-142 (DTPGH), and 192-195 (NKVD) contribute to the GTP site.

It belongs to the TRAFAC class translation factor GTPase superfamily. Classic translation factor GTPase family. LepA subfamily.

It localises to the mitochondrion inner membrane. It carries out the reaction GTP + H2O = GDP + phosphate + H(+). In terms of biological role, promotes mitochondrial protein synthesis. May act as a fidelity factor of the translation reaction, by catalyzing a one-codon backward translocation of tRNAs on improperly translocated ribosomes. Binds to mitochondrial ribosomes in a GTP-dependent manner. The sequence is that of Translation factor GUF1, mitochondrial from Coccidioides posadasii (strain C735) (Valley fever fungus).